The sequence spans 245 residues: Proteolipid protein DM alpha (245 aa).

4 helical membrane-spanning segments follow: residues 19–35 (LIAT…FCGC), 71–87 (IIYG…VLLL), 117–133 (FIFL…GVFA), and 204–220 (LFIA…IALL).

This sequence belongs to the myelin proteolipid protein family. In terms of tissue distribution, highly expressed in white matter in myelinating shark brain.

The protein resides in the membrane. In Squalus acanthias (Spiny dogfish), this protein is Proteolipid protein DM alpha.